The primary structure comprises 311 residues: Bifunctional protein FolD (311 aa).

174 to 176 contacts NADP(+); the sequence is GKG.

It belongs to the tetrahydrofolate dehydrogenase/cyclohydrolase family. Homodimer.

It carries out the reaction (6R)-5,10-methylene-5,6,7,8-tetrahydrofolate + NADP(+) = (6R)-5,10-methenyltetrahydrofolate + NADPH. The enzyme catalyses (6R)-5,10-methenyltetrahydrofolate + H2O = (6R)-10-formyltetrahydrofolate + H(+). The protein operates within one-carbon metabolism; tetrahydrofolate interconversion. Functionally, catalyzes the oxidation of 5,10-methylenetetrahydrofolate to 5,10-methenyltetrahydrofolate and then the hydrolysis of 5,10-methenyltetrahydrofolate to 10-formyltetrahydrofolate. The protein is Bifunctional protein FolD of Pyrobaculum neutrophilum (strain DSM 2338 / JCM 9278 / NBRC 100436 / V24Sta) (Thermoproteus neutrophilus).